Reading from the N-terminus, the 194-residue chain is ATP-dependent Clp protease proteolytic subunit (194 aa).

S98 functions as the Nucleophile in the catalytic mechanism. The active site involves H123.

Belongs to the peptidase S14 family. As to quaternary structure, component of the chloroplastic Clp protease core complex.

Its subcellular location is the plastid. The protein resides in the cyanelle. The enzyme catalyses Hydrolysis of proteins to small peptides in the presence of ATP and magnesium. alpha-casein is the usual test substrate. In the absence of ATP, only oligopeptides shorter than five residues are hydrolyzed (such as succinyl-Leu-Tyr-|-NHMec, and Leu-Tyr-Leu-|-Tyr-Trp, in which cleavage of the -Tyr-|-Leu- and -Tyr-|-Trp bonds also occurs).. Cleaves peptides in various proteins in a process that requires ATP hydrolysis. Has a chymotrypsin-like activity. Plays a major role in the degradation of misfolded proteins. The polypeptide is ATP-dependent Clp protease proteolytic subunit (clpP-A) (Cyanophora paradoxa).